The following is a 281-amino-acid chain: Pantothenate synthetase (281 aa).

31-38 (MGALHDGH) lines the ATP pocket. The active-site Proton donor is H38. Q62 is a (R)-pantoate binding site. Residue Q62 participates in beta-alanine binding. Residue 148–151 (GQKD) participates in ATP binding. Residue Q154 coordinates (R)-pantoate. ATP is bound by residues V177 and 185–188 (LSSR).

The protein belongs to the pantothenate synthetase family. In terms of assembly, homodimer.

It is found in the cytoplasm. It carries out the reaction (R)-pantoate + beta-alanine + ATP = (R)-pantothenate + AMP + diphosphate + H(+). Its pathway is cofactor biosynthesis; (R)-pantothenate biosynthesis; (R)-pantothenate from (R)-pantoate and beta-alanine: step 1/1. In terms of biological role, catalyzes the condensation of pantoate with beta-alanine in an ATP-dependent reaction via a pantoyl-adenylate intermediate. This Dinoroseobacter shibae (strain DSM 16493 / NCIMB 14021 / DFL 12) protein is Pantothenate synthetase.